A 198-amino-acid chain; its full sequence is Virion membrane protein A17 precursor homolog (198 aa).

Residues 1 to 55 (MDNNYLNYYNVFEEFDAGAGIKEKELFTEEQQLSFLPKKGLGNGGFDGVERLYSN) lie on the Virion surface side of the membrane. Residues 56–76 (IINNNDIKSLLALIMLVFAIN) traverse the membrane as a helical segment. Residues 77–145 (TNSLVALIFI…TSKISKGFKR (69 aa)) lie on the Intravirion side of the membrane. The helical transmembrane segment at 146–166 (AIDVVLLVILGFYIVKIYGID) threads the bilayer. Residues 167 to 198 (RQISIPSRRYCRQMSGPSSLENLNAFQTHSNY) lie on the Virion surface side of the membrane. A Phosphotyrosine modification is found at Y198.

This sequence belongs to the chordopoxvirinae A17 family. As to quaternary structure, interacts (via N-terminus) with D13 scaffold; this interaction helps D13 to associate with membranes. Interacts with A14. Interacts with A27; this interaction allows A27 to be anchored in the mature virion (MV) membrane. Part of a complex composed of A17, A25, A26 and A27. In terms of processing, the 22 kDa precursor is probably cleaved by the I7 protease during virus maturation. Phosphorylated on tyrosine and threonine. Its phosphorylation state is regulated by the F10 kinase and the H1 phosphatase. Phosphorylation by F10 kinase seems to be required to form the membranes associated with IV.

The protein localises to the virion membrane. In terms of biological role, envelope protein which participates in virus morphogenesis. Needed for an early step in viral crescent membrane formation by interacting with D13 scaffold protein. Its interaction with D13 scaffold protein leads to the formation of rigid, crescent-shaped membranes that assemble around the cytoplasmic virus factory. Membrane anchor for the protein A27. A17-A27 virus envelope protein might be involved in fusion or attachment, and can further associate to A26. The protein is Virion membrane protein A17 precursor homolog of Fowlpox virus (strain NVSL) (FPV).